The sequence spans 290 residues: Bifunctional protein FolD (290 aa).

Residues Gly-166 to Ser-168, Ser-191, and Ile-232 contribute to the NADP(+) site.

Belongs to the tetrahydrofolate dehydrogenase/cyclohydrolase family. As to quaternary structure, homodimer.

It catalyses the reaction (6R)-5,10-methylene-5,6,7,8-tetrahydrofolate + NADP(+) = (6R)-5,10-methenyltetrahydrofolate + NADPH. The catalysed reaction is (6R)-5,10-methenyltetrahydrofolate + H2O = (6R)-10-formyltetrahydrofolate + H(+). It participates in one-carbon metabolism; tetrahydrofolate interconversion. Functionally, catalyzes the oxidation of 5,10-methylenetetrahydrofolate to 5,10-methenyltetrahydrofolate and then the hydrolysis of 5,10-methenyltetrahydrofolate to 10-formyltetrahydrofolate. The chain is Bifunctional protein FolD from Halorhodospira halophila (strain DSM 244 / SL1) (Ectothiorhodospira halophila (strain DSM 244 / SL1)).